A 316-amino-acid polypeptide reads, in one-letter code: GTPase Era (316 aa).

The Era-type G domain occupies 9–190 (RAGFAAIIGA…TAKLVSMMPE (182 aa)). Residues 17 to 24 (GAPNAGKS) form a G1 region. Residue 17–24 (GAPNAGKS) participates in GTP binding. Residues 43-47 (QTTRF) form a G2 region. The tract at residues 64–67 (DTPG) is G3. GTP is bound by residues 64 to 68 (DTPGI) and 140 to 143 (NKID). Residues 140–143 (NKID) are G4. A G5 region spans residues 169 to 171 (ISA). One can recognise a KH type-2 domain in the interval 221–298 (VHEELPYAAT…HLFLHVKVKE (78 aa)).

The protein belongs to the TRAFAC class TrmE-Era-EngA-EngB-Septin-like GTPase superfamily. Era GTPase family. In terms of assembly, monomer.

It localises to the cytoplasm. It is found in the cell inner membrane. In terms of biological role, an essential GTPase that binds both GDP and GTP, with rapid nucleotide exchange. Plays a role in 16S rRNA processing and 30S ribosomal subunit biogenesis and possibly also in cell cycle regulation and energy metabolism. The sequence is that of GTPase Era from Caulobacter vibrioides (strain ATCC 19089 / CIP 103742 / CB 15) (Caulobacter crescentus).